The chain runs to 651 residues: DNA ligase (651 aa).

Residues 32-36 (DAEYD), 75-76 (SL), and Glu106 contribute to the NAD(+) site. Residue Lys108 is the N6-AMP-lysine intermediate of the active site. Residues Arg129, Glu164, Lys271, and Lys295 each contribute to the NAD(+) site. The Zn(2+) site is built by Cys389, Cys392, Cys405, and Cys411. Residues 575–651 (SSDSFLNNKI…LDEEQWNRLC (77 aa)) form the BRCT domain.

This sequence belongs to the NAD-dependent DNA ligase family. LigA subfamily. The cofactor is Mg(2+). It depends on Mn(2+) as a cofactor.

The enzyme catalyses NAD(+) + (deoxyribonucleotide)n-3'-hydroxyl + 5'-phospho-(deoxyribonucleotide)m = (deoxyribonucleotide)n+m + AMP + beta-nicotinamide D-nucleotide.. DNA ligase that catalyzes the formation of phosphodiester linkages between 5'-phosphoryl and 3'-hydroxyl groups in double-stranded DNA using NAD as a coenzyme and as the energy source for the reaction. It is essential for DNA replication and repair of damaged DNA. The polypeptide is DNA ligase (Wolbachia pipientis subsp. Culex pipiens (strain wPip)).